Here is a 638-residue protein sequence, read N- to C-terminus: ABC transporter G family member 12 (638 aa).

The disordered stretch occupies residues 42-61; that stretch reads KQEKAKKKNDTESSTGDMNT. In terms of domain architecture, ABC transporter spans 58-301; sequence DMNTGVSTTI…SLGYPCPNNT (244 aa). 91 to 98 contributes to the ATP binding site; the sequence is GPSGSGKS. The 260-residue stretch at 374–633 folds into the ABC transmembrane type-2 domain; that stretch reads GNFVARVGTA…WTSYLALHFL (260 aa). The next 7 membrane-spanning stretches (helical) occupy residues 376-396, 410-430, 459-479, 484-504, 516-536, 544-564, and 612-632; these read FVARVGTAVVTGLLFGVCFAG, TIFFLITGLNLTPFAVISLFL, TLIVFLVALINAAICYLFAHL, GHFFFAIMVYFFVHLLSDFMI, MTFAYGSGLSVIYMLFAGFYV, SFGWLHWVNPLFYSFVSLVVN, and FGVVVAWTVFFFWTSYLALHF.

It belongs to the ABC transporter superfamily. ABCG family. Eye pigment precursor importer (TC 3.A.1.204) subfamily.

The protein localises to the membrane. The sequence is that of ABC transporter G family member 12 (abcG12) from Dictyostelium discoideum (Social amoeba).